Consider the following 169-residue polypeptide: Disulfide bond formation protein B (169 aa).

The Cytoplasmic segment spans residues 1-14; sequence MMRFLNHCSQGRSA. A helical membrane pass occupies residues 15-31; the sequence is WLLMILTALILESSALY. The Periplasmic portion of the chain corresponds to 32–49; that stretch reads FQHVMKLQPCVMCIYERV. A disulfide bridge connects residues cysteine 41 and cysteine 44. A helical transmembrane segment spans residues 50 to 65; it reads ALFGVLSAGILGVIAP. Residues 66 to 71 lie on the Cytoplasmic side of the membrane; the sequence is KTPLRW. A helical membrane pass occupies residues 72–89; that stretch reads LAIILWIYSAWGGLQLAW. Residues 90 to 144 lie on the Periplasmic side of the membrane; it reads QHTMMQLHPSPFNTCDFFVNFPSWLALNQWLPSVFEATGDCSVRQWQFLTLEMPQ. Cysteine 104 and cysteine 130 are joined by a disulfide. The chain crosses the membrane as a helical span at residues 145-163; the sequence is WLVGIFAAYLVVAALVLIS. Topologically, residues 164–169 are cytoplasmic; the sequence is QFFSRK.

The protein belongs to the DsbB family.

Its subcellular location is the cell inner membrane. Its function is as follows. Required for disulfide bond formation in some periplasmic proteins. Acts by oxidizing the DsbA protein. The protein is Disulfide bond formation protein B of Photorhabdus laumondii subsp. laumondii (strain DSM 15139 / CIP 105565 / TT01) (Photorhabdus luminescens subsp. laumondii).